A 376-amino-acid chain; its full sequence is Multicilin (376 aa).

The stretch at 165-213 forms a coiled coil; sequence EQYWRDVADHNQKALGDALVENNQLQVSLTEKQEEIASLKEKNIQLNEL. The interval 230-261 is disordered; it reads ERPKHSSGATQGRLPVKRSLEDFYPQSNEPDS. Positions 331 to 376 are TIRT domain; the sequence is TELEEDVSFRTSIKEHSTIRTLAFPQGNAFTIRTAAGGYKFRWVPN.

It belongs to the geminin family. As to quaternary structure, component of the EDM complex, at least composed of e2f4, e2f5, mcidas and tfdp1.

The protein localises to the nucleus. Its function is as follows. Transcription regulator specifically required for multiciliate cell differentiation. Acts in a multiprotein complex containing e2f4 and e2f5 that binds and activate genes required for centriole biogenesis. Activates genes required for centriole assembly (plk4, cep152) and genes specifically required for motile cilia formation (foxj1). Also promotes the deuterosome pathway of centriole biogenesis by activating expression of deup1, but not its paralog cep63. This Xenopus tropicalis (Western clawed frog) protein is Multicilin (mcidas).